Here is a 132-residue protein sequence, read N- to C-terminus: MTMTDPIADFLTRLRNANSAYHDEVTVPHSNIKANIAQILKNEGYIRDFRTEDARVGKSLIIQLKYGPSRERSIAGLRRVSKPGLRVYAKSINLPRVLGGLGVVIISTSSGLLTDRQAARQGVGGEVLAYVW.

Belongs to the universal ribosomal protein uS8 family. In terms of assembly, part of the 30S ribosomal subunit. Contacts proteins S5 and S12.

Its function is as follows. One of the primary rRNA binding proteins, it binds directly to 16S rRNA central domain where it helps coordinate assembly of the platform of the 30S subunit. This Mycobacterium leprae (strain Br4923) protein is Small ribosomal subunit protein uS8.